The primary structure comprises 620 residues: mRNA cap guanine-N(7) methyltransferase (620 aa).

Disordered regions lie at residues 1-176 (MLPP…APSS) and 193-304 (AHAN…DDEY). Residues 29–44 (RSPSMSLSPRSQNQSL) are compositionally biased toward polar residues. 2 stretches are compositionally biased toward low complexity: residues 45 to 60 (PYPS…SAHP) and 136 to 157 (PQPT…TPHH). In terms of domain architecture, mRNA cap 0 methyltransferase spans 345–620 (SPIIGLKKFN…LYMGFAFEKM (276 aa)). 354-355 (NN) lines the mRNA pocket. 6 residues coordinate S-adenosyl-L-methionine: Lys-358, Gly-377, Asp-399, Asp-428, Gln-454, and Tyr-459.

This sequence belongs to the class I-like SAM-binding methyltransferase superfamily. mRNA cap 0 methyltransferase family.

It is found in the nucleus. The catalysed reaction is a 5'-end (5'-triphosphoguanosine)-ribonucleoside in mRNA + S-adenosyl-L-methionine = a 5'-end (N(7)-methyl 5'-triphosphoguanosine)-ribonucleoside in mRNA + S-adenosyl-L-homocysteine. Functionally, responsible for methylating the 5'-cap structure of mRNAs. The protein is mRNA cap guanine-N(7) methyltransferase (ABD1) of Cryptococcus neoformans var. neoformans serotype D (strain JEC21 / ATCC MYA-565) (Filobasidiella neoformans).